The chain runs to 541 residues: Chaperonin GroEL (541 aa).

ATP is bound by residues 29–32, 86–90, Gly413, 476–478, and Asp492; these read TLGP, DGTTT, and NAA.

Belongs to the chaperonin (HSP60) family. Forms a cylinder of 14 subunits composed of two heptameric rings stacked back-to-back. Interacts with the co-chaperonin GroES.

The protein localises to the cytoplasm. It carries out the reaction ATP + H2O + a folded polypeptide = ADP + phosphate + an unfolded polypeptide.. Functionally, together with its co-chaperonin GroES, plays an essential role in assisting protein folding. The GroEL-GroES system forms a nano-cage that allows encapsulation of the non-native substrate proteins and provides a physical environment optimized to promote and accelerate protein folding. The polypeptide is Chaperonin GroEL (Enterococcus faecalis (strain ATCC 700802 / V583)).